The chain runs to 85 residues: Translational regulator CsrA (85 aa).

Belongs to the CsrA/RsmA family. In terms of assembly, homodimer; the beta-strands of each monomer intercalate to form a hydrophobic core, while the alpha-helices form wings that extend away from the core.

It localises to the cytoplasm. In terms of biological role, a translational regulator that binds mRNA to regulate translation initiation and/or mRNA stability. Usually binds in the 5'-UTR at or near the Shine-Dalgarno sequence preventing ribosome-binding, thus repressing translation. Its main target seems to be the major flagellin gene, while its function is anatagonized by FliW. This Leifsonia xyli subsp. xyli (strain CTCB07) protein is Translational regulator CsrA.